Reading from the N-terminus, the 896-residue chain is Sodium/hydrogen exchanger 5 (896 aa).

Over M1–E45 the chain is Cytoplasmic. Residues A46–L66 form a helical membrane-spanning segment. Residues S67–L73 are Extracellular-facing. The helical transmembrane segment at V74–V94 threads the bilayer. Topologically, residues A95–E103 are cytoplasmic. The chain crosses the membrane as a helical span at residues P104–P124. Residues S125–A134 are Extracellular-facing. A helical transmembrane segment spans residues I135–W155. Residues G156–D173 are Cytoplasmic-facing. Residues F174–E194 traverse the membrane as a helical segment. Residues E195 to E200 lie on the Extracellular side of the membrane. Residue N199 is glycosylated (N-linked (GlcNAc...) asparagine). The helical transmembrane segment at T201–Y221 threads the bilayer. Over K222–S246 the chain is Cytoplasmic. The helical transmembrane segment at L247 to L267 threads the bilayer. Topologically, residues T268 to R276 are extracellular. The helical transmembrane segment at I277 to A297 threads the bilayer. Residues S298–T331 lie on the Cytoplasmic side of the membrane. A helical membrane pass occupies residues M332–V352. Topologically, residues D353–D360 are extracellular. Residues S361–L381 traverse the membrane as a helical segment. Topologically, residues Q382–D398 are cytoplasmic. A helical membrane pass occupies residues Q399–L419. The Extracellular portion of the chain corresponds to D420–D428. Residues Y429–I449 form a helical membrane-spanning segment. Residues K450–L896 are Cytoplasmic-facing. Positions G576 to G721 are required for interaction with ARRB2. Disordered regions lie at residues T658 to R686, E701 to E720, and H818 to E864. A compositionally biased stretch (basic residues) spans S660 to K672. Positions E854 to E864 are enriched in polar residues.

Belongs to the monovalent cation:proton antiporter 1 (CPA1) transporter (TC 2.A.36) family. In terms of assembly, interacts with CHP1 and CHP2. Interacts with ARRB2; facilitates the endocytosis of SLC9A5 from the plasma membrane. Interacts with RACK1; this interaction positively regulates SLC9A5 activity and promotes SLC9A5 localization to focal adhesions. Interacts with SCAMP2; this interaction regulates SLC9A5 cell-surface targeting and SLC9A5 activity. Phosphorylated by PRKAA2; promotes its accumulation at the cell surface. Phosphorylated by CSNK2A1 in a manner favoring its beta-arrestin binding and endocytosis. In terms of tissue distribution, mainly expressed in brain. Expressed in neurons of the central and peripheral nervous system. Expressed also in testis, spleen, and skeletal muscle.

Its subcellular location is the cell membrane. The protein resides in the recycling endosome membrane. The protein localises to the cell projection. It localises to the dendritic spine membrane. It is found in the synaptic cell membrane. Its subcellular location is the cell junction. The protein resides in the focal adhesion. It carries out the reaction Na(+)(in) + H(+)(out) = Na(+)(out) + H(+)(in). ATP-depletion almost completely abolishes SLC9A5 activity. Inhibited by amiloride compounds. Its function is as follows. Plasma membrane Na(+)/H(+) antiporter. Mediates the electroneutral exchange of intracellular H(+) ions for extracellular Na(+) in 1:1 stoichiometry, thus regulating intracellular pH homeostasis, in particular in neural tissues. Acts as a negative regulator of dendritic spine growth. Plays a role in postsynaptic remodeling and signaling. Can also contribute to organellar pH regulation, with consequences for receptor tyrosine kinase trafficking. The polypeptide is Sodium/hydrogen exchanger 5 (Homo sapiens (Human)).